The sequence spans 306 residues: UDP-N-acetylenolpyruvoylglucosamine reductase (306 aa).

Residues 33-197 (TGGEADFYLS…LEAAFTLEPG (165 aa)) enclose the FAD-binding PCMH-type domain. R176 is a catalytic residue. S226 functions as the Proton donor in the catalytic mechanism. The active site involves E296.

It belongs to the MurB family. It depends on FAD as a cofactor.

The protein localises to the cytoplasm. The enzyme catalyses UDP-N-acetyl-alpha-D-muramate + NADP(+) = UDP-N-acetyl-3-O-(1-carboxyvinyl)-alpha-D-glucosamine + NADPH + H(+). Its pathway is cell wall biogenesis; peptidoglycan biosynthesis. Functionally, cell wall formation. The sequence is that of UDP-N-acetylenolpyruvoylglucosamine reductase from Staphylococcus epidermidis (strain ATCC 35984 / DSM 28319 / BCRC 17069 / CCUG 31568 / BM 3577 / RP62A).